The chain runs to 682 residues: MSEPRKILVTSALPYANGPVHLGHMLEYIQTDMWVRFQKHRGNQCIYVCADDAHGSAIMLRAEKEGITPEQLIDNVKAEHSADFADFLVDFDNFHSTHSDENRELSSMIYTRLRDAGHIATRSVTQYFDPEKKMFLADRFIKGTCPKCAAVDQYGDNCEKCGATYAPTDLKDPKSAISGATPVLKDSKHFFFDLPAFDTMLKSWTRSGTLQDAVANKIAEWLDSGLQQWDISRDAPYFGFEIPDEPGKYFYVWLDAPIGYMASFKNLCARRPDLDFDAYWGKDATTELYHFIGKDIVNFHALFWPAMLEGADLRKPTGVNVHGYLTVNGQKMSKSRGTFIKARTYLDHLPPEYLRYYYASKLGRGVDDLDLNLEDFVQKVNSDLIGKVVNIASRCAGFIHKGNAGVMVDANAAPELTDAFLAAAPSIADAYEARDFARAMRETMALADRANAYIAEKAPWALAKQEGKQDEVQAVCALGVNLFRQLVIFLKPVLPNLAADAEKFLNVAPLTWDDHKTLLTHHQLNPFSALMTRIDPLKVEAMAAASKEDLTATDTSTDAAPAGNGELAKDPLSAEIDFDAFAAVDLRVALILKAEHVEGADKLLRLTLDIGDEQRNVFSGIKSAYPDPSKLEGRLTMMIANLKPRKMRFGISEGMVMAAGPGGEEIYLLSPDSGAKPGQRIK.

The short motif at 14–24 (PYANGPVHLGH) is the 'HIGH' region element. Cys-145, Cys-148, Cys-158, and Cys-161 together coordinate Zn(2+). A 'KMSKS' region motif is present at residues 331-335 (KMSKS). Lys-334 lines the ATP pocket. The tRNA-binding domain occupies 580–682 (AFAAVDLRVA…SGAKPGQRIK (103 aa)).

The protein belongs to the class-I aminoacyl-tRNA synthetase family. MetG type 1 subfamily. Homodimer. Zn(2+) serves as cofactor.

It is found in the cytoplasm. The enzyme catalyses tRNA(Met) + L-methionine + ATP = L-methionyl-tRNA(Met) + AMP + diphosphate. Its function is as follows. Is required not only for elongation of protein synthesis but also for the initiation of all mRNA translation through initiator tRNA(fMet) aminoacylation. The protein is Methionine--tRNA ligase of Pseudomonas syringae pv. tomato (strain ATCC BAA-871 / DC3000).